The chain runs to 208 residues: Small ribosomal subunit protein uS4 (208 aa).

One can recognise an S4 RNA-binding domain in the interval 98–159 (RRLDNVIYRL…KSRTVAVITN (62 aa)).

The protein belongs to the universal ribosomal protein uS4 family. Part of the 30S ribosomal subunit. Contacts protein S5. The interaction surface between S4 and S5 is involved in control of translational fidelity.

In terms of biological role, one of the primary rRNA binding proteins, it binds directly to 16S rRNA where it nucleates assembly of the body of the 30S subunit. Functionally, with S5 and S12 plays an important role in translational accuracy. The polypeptide is Small ribosomal subunit protein uS4 (Desulfatibacillum aliphaticivorans).